Here is a 1048-residue protein sequence, read N- to C-terminus: MGPPRHPQAGEIEAGGAGGGRRLQVEMSSQQFPRLGAPSTGLSQAPSQIANSGSAGLINPAATVNDESGRDSEVSAREHMSSSSSLQSREEKQEPVVVRPYPQVQMLSTHHAVASATPVAVTAPPAHLTPAVPLSFSEGLMKPPPKPTMPSRPIAPAPPSTLSLPPKVPGQVTVTMESSIPQASAIPVATISGQQGHPSNLHHIMTTNVQMSIIRSNAPGPPLHIGASHLPRGAAAAAVMSSSKVTTVLRPTSQLPNAATAQPAVQHIIHQPIQSRPPVTTSNAIPPAVVATVSATRAQSPVITTTAAHATDSALSRPTLSIQHPPSAAISIQRPAQSRDVTTRITLPSHPALGTPKQQLHTMAQKTIFSTGTPVAAATVAPILATNTIPSATTAGSVSHTQAPTSTIVTMTVPSHSSHATAVTTSNIPVAKVVPQQITHTSPRIQPDYPAERSSLIPISGHRASPNPVAMETRSDNRPSVPVQFQYFLPTYPPSAYPLAAHTYTPITSSVSTIRQYPVSAQAPNSAITAQTGVGVASTVHLNPMQLMTVDASHARHIQGIQPAPISTQGIQPAPIGTPGIQPAPLGTQGIHSATPINTQGLQPAPMGTQQPQPEGKTSAVVLADGATIVANPISNPFSAAPAATTVVQTHSQSASTNAPAQGSSPRPSILRKKPATDGAKPKSEIHVSMATPVTVSMETVSNQNNDQPTIAVPPTAQQPPPTIPTMIAAASPPSQPAVALSTIPGAVPITPPITTIAAAPPPSVTVGGSLSSVLGPPVPEIKVKEEVEPMDIMRPVSAVPPLATNTVSPSLALLANNLSMPTSDLPPGASPRKKPRKQQHVISTEEGDMMETNSTDDEKSTAKSLLVKAEKRKSPPKEYIDEEGVRYVPVRPRPPITLLRHYRNPWKAAYHHFQRYSDVRVKEEKKAMLQEIANQKGVSCRAQGWKVHLCAAQLLQLTNLEHDVYERLTNLQEGIIPKKKAATDDDLHRINELIQGNMQRCKLVMDQISEARDSMLKVLDHKDRVLKLLNKNGTVKKVSKLKRKEKV.

A disordered region spans residues 1–95 (MGPPRHPQAG…LQSREEKQEP (95 aa)). The segment covering 40–54 (TGLSQAPSQIANSGS) has biased composition (polar residues). Positions 67–80 (ESGRDSEVSAREHM) are enriched in basic and acidic residues. R232 is subject to Omega-N-methylarginine. A Phosphothreonine modification is found at T355. Phosphoserine occurs at positions 442 and 465. Disordered stretches follow at residues 458-477 (PISG…RSDN), 576-617 (IGTP…PEGK), and 649-687 (QTHS…SEIH). Composition is skewed to polar residues over residues 590–613 (GIHS…QQPQ) and 649–667 (QTHS…SSPR). K785 is covalently cross-linked (Glycyl lysine isopeptide (Lys-Gly) (interchain with G-Cter in SUMO2)). The segment at 819–871 (LSMPTSDLPPGASPRKKPRKQQHVISTEEGDMMETNSTDDEKSTAKSLLVKAE) is disordered. An interactions with SIN3A and HDAC1 region spans residues 836–1047 (PRKQQHVIST…KVSKLKRKEK (212 aa)). S855 carries the phosphoserine modification. Position 856 is a phosphothreonine (T856). Residues K864 and K869 each participate in a glycyl lysine isopeptide (Lys-Gly) (interchain with G-Cter in SUMO2) cross-link. A Phosphoserine modification is found at S875.

Belongs to the SAP130 family. Component of a mSin3A corepressor complex that contains SIN3A, SAP130, SUDS3/SAP45, ARID4B/SAP180, HDAC1 and HDAC2. Interacts (released by dead or dying cells) with CLEC4E. In terms of processing, acetylated. Post-translationally, sumoylated with SUMO1. Expressed in various cancer cell ines.

Its subcellular location is the nucleus. Acts as a transcriptional repressor. May function in the assembly and/or enzymatic activity of the mSin3A corepressor complex or in mediating interactions between the complex and other regulatory complexes. This chain is Histone deacetylase complex subunit SAP130 (SAP130), found in Homo sapiens (Human).